Here is a 326-residue protein sequence, read N- to C-terminus: Undecaprenyl-phosphate 4-deoxy-4-formamido-L-arabinose transferase (326 aa).

2 helical membrane passes run 235-255 and 270-290; these read MLSV…LLLI and VFML…GMGL.

The protein belongs to the glycosyltransferase 2 family.

The protein resides in the cell inner membrane. It carries out the reaction UDP-4-deoxy-4-formamido-beta-L-arabinose + di-trans,octa-cis-undecaprenyl phosphate = 4-deoxy-4-formamido-alpha-L-arabinopyranosyl di-trans,octa-cis-undecaprenyl phosphate + UDP. It participates in glycolipid biosynthesis; 4-amino-4-deoxy-alpha-L-arabinose undecaprenyl phosphate biosynthesis; 4-amino-4-deoxy-alpha-L-arabinose undecaprenyl phosphate from UDP-4-deoxy-4-formamido-beta-L-arabinose and undecaprenyl phosphate: step 1/2. The protein operates within bacterial outer membrane biogenesis; lipopolysaccharide biosynthesis. Its function is as follows. Catalyzes the transfer of 4-deoxy-4-formamido-L-arabinose from UDP to undecaprenyl phosphate. The modified arabinose is attached to lipid A and is required for resistance to polymyxin and cationic antimicrobial peptides. The protein is Undecaprenyl-phosphate 4-deoxy-4-formamido-L-arabinose transferase of Sodalis glossinidius (strain morsitans).